A 166-amino-acid chain; its full sequence is C-signal (166 aa).

In terms of processing, the mature C-signal (p17) is derived from the precursor sequence (p25) by proteolytic cleavage. The subtilisin-like protease PopC is directly responsible for cleavage of p25 to p17. The cleavage site is probably located between amino acid residues 60 and 68 in p25.

It is found in the secreted. Its subcellular location is the cell outer membrane. Synthesized as a precursor protein (p25), which is cleaved after secretion to generate the mature active C-signal (p17). The p25 precursor purified from M.xanthus cells does not display C-signal activity. In terms of biological role, cell-cell signaling protein required for fruiting body formation, a multicellular developmental program that is induced in response to starvation. Necessary for rippling, cellular aggregation, spore differentiation and for gene expression that is initiated after 6 hours of starvation. In starving cells, the C-signal directly induces aggregation and sporulation, which are induced at distinct threshold levels of C-signaling. Contact with C-signaling induces cells to glide with high speed and low stop and reversal frequencies toward aggregation centers. The C-signal acts as a morphogen and induces distinct events at distinct threshold levels. A regulated increase in the level of C-signaling during development ensures the correct temporal order of aggregation and sporulation. This is C-signal from Myxococcus xanthus.